The sequence spans 261 residues: NAD-capped RNA hydrolase NudC (261 aa).

Arg-74 provides a ligand contact to substrate. Residues Cys-103, Cys-106, Cys-121, and Cys-124 each contribute to the Zn(2+) site. A substrate-binding site is contributed by Tyr-129. One can recognise a Nudix hydrolase domain in the interval 130-253 (PRIFPCIIVA…TIARALIEQT (124 aa)). The a divalent metal cation site is built by Ala-163, Glu-179, and Glu-183. Positions 164–185 (GFVEVGETLEQCVAREVKEETG) match the Nudix box motif. 197-204 (QPWAFPSS) is a substrate binding site. Glu-224 serves as a coordination point for a divalent metal cation. Position 246 (Ala-246) interacts with substrate.

It belongs to the Nudix hydrolase family. NudC subfamily. As to quaternary structure, homodimer. The cofactor is Mg(2+). Mn(2+) is required as a cofactor. Requires Zn(2+) as cofactor.

It carries out the reaction a 5'-end NAD(+)-phospho-ribonucleoside in mRNA + H2O = a 5'-end phospho-adenosine-phospho-ribonucleoside in mRNA + beta-nicotinamide D-ribonucleotide + 2 H(+). It catalyses the reaction NAD(+) + H2O = beta-nicotinamide D-ribonucleotide + AMP + 2 H(+). The enzyme catalyses NADH + H2O = reduced beta-nicotinamide D-ribonucleotide + AMP + 2 H(+). In terms of biological role, mRNA decapping enzyme that specifically removes the nicotinamide adenine dinucleotide (NAD) cap from a subset of mRNAs by hydrolyzing the diphosphate linkage to produce nicotinamide mononucleotide (NMN) and 5' monophosphate mRNA. The NAD-cap is present at the 5'-end of some mRNAs and stabilizes RNA against 5'-processing. Has preference for mRNAs with a 5'-end purine. Catalyzes the hydrolysis of a broad range of dinucleotide pyrophosphates. This chain is NAD-capped RNA hydrolase NudC, found in Vibrio vulnificus (strain CMCP6).